The chain runs to 528 residues: GMP synthase [glutamine-hydrolyzing] (528 aa).

In terms of domain architecture, Glutamine amidotransferase type-1 spans 22-212; sequence AILVLDFGSQ…VFKICQSQTN (191 aa). Residue cysteine 99 is the Nucleophile of the active site. Residues histidine 186 and glutamate 188 contribute to the active site. The 191-residue stretch at 213–403 folds into the GMPS ATP-PPase domain; sequence WSLESNVETI…LGIKKEALYR (191 aa). 240–246 lines the ATP pocket; it reads SGGTDSL.

As to quaternary structure, homodimer.

It catalyses the reaction XMP + L-glutamine + ATP + H2O = GMP + L-glutamate + AMP + diphosphate + 2 H(+). Its pathway is purine metabolism; GMP biosynthesis; GMP from XMP (L-Gln route): step 1/1. In terms of biological role, catalyzes the synthesis of GMP from XMP. The protein is GMP synthase [glutamine-hydrolyzing] of Borrelia garinii subsp. bavariensis (strain ATCC BAA-2496 / DSM 23469 / PBi) (Borreliella bavariensis).